A 192-amino-acid chain; its full sequence is dCTP deaminase, dUMP-forming (192 aa).

DCTP-binding positions include 101–106 (KSSLGR), D119, 127–129 (TLE), Q148, Y162, and Q174. The active-site Proton donor/acceptor is the E129. Residues 169–192 (SRYQGQRGPTPSRSWQSWRTWPTR) form a disordered region. Residues 171 to 192 (YQGQRGPTPSRSWQSWRTWPTR) are compositionally biased toward polar residues.

The protein belongs to the dCTP deaminase family. Homotrimer.

It carries out the reaction dCTP + 2 H2O = dUMP + NH4(+) + diphosphate. It functions in the pathway pyrimidine metabolism; dUMP biosynthesis; dUMP from dCTP: step 1/1. Its function is as follows. Bifunctional enzyme that catalyzes both the deamination of dCTP to dUTP and the hydrolysis of dUTP to dUMP without releasing the toxic dUTP intermediate. The sequence is that of dCTP deaminase, dUMP-forming from Salinispora tropica (strain ATCC BAA-916 / DSM 44818 / JCM 13857 / NBRC 105044 / CNB-440).